The sequence spans 144 residues: Peroxisome assembly protein 22 (144 aa).

Residues 13 to 35 (YGAVSLASLLVAASIVAYRWWNA) traverse the membrane as a helical segment.

This sequence belongs to the peroxin-22 family.

Its subcellular location is the peroxisome membrane. Its function is as follows. Involved in peroxisome biogenesis. The sequence is that of Peroxisome assembly protein 22 (PEX22) from Eremothecium gossypii (strain ATCC 10895 / CBS 109.51 / FGSC 9923 / NRRL Y-1056) (Yeast).